We begin with the raw amino-acid sequence, 407 residues long: MKRVFLIVLDSFGIGSSPDADKFNDVGSNTFGHIVEKCFLGEANVGRKGVLCIPNLVKLGIINAAKESTGQYPLGFNYSSNVIASYGFASEISSGKDTTSGHWEIAGVPVLDDWYYFKEKQNSFPESLLEKIIRRSELTGFIGNCHASGTDIISRLGEEHIQTKKPIVYTSSDSVFQIACHEEFFGLSNLYKLCKTVRFILDQYNYKVARVIARPFIGNDKLQFQRTGNRRDFSIKPFATTVIKKLIDEKQGQVIAIGKVSDIYGGIGISKNIKSTGLYELCSTTIHEMKKALNNTIVFTNLVDFDSNWGHRRDVSGYAKGLELFDSRLSEIISLVQKNDLLILTADHGCDPTWIGTDHTRENVPVLIYSPGIKKNFLGHRKTFADIGQTIAKYFLLTDMSYGQNML.

6 residues coordinate Mn(2+): Asp-10, Asp-306, His-311, Asp-347, His-348, and His-359.

Belongs to the phosphopentomutase family. It depends on Mn(2+) as a cofactor.

It localises to the cytoplasm. The enzyme catalyses 2-deoxy-alpha-D-ribose 1-phosphate = 2-deoxy-D-ribose 5-phosphate. The catalysed reaction is alpha-D-ribose 1-phosphate = D-ribose 5-phosphate. It functions in the pathway carbohydrate degradation; 2-deoxy-D-ribose 1-phosphate degradation; D-glyceraldehyde 3-phosphate and acetaldehyde from 2-deoxy-alpha-D-ribose 1-phosphate: step 1/2. In terms of biological role, isomerase that catalyzes the conversion of deoxy-ribose 1-phosphate (dRib-1-P) and ribose 1-phosphate (Rib-1-P) to deoxy-ribose 5-phosphate (dRib-5-P) and ribose 5-phosphate (Rib-5-P), respectively. This is Phosphopentomutase from Buchnera aphidicola subsp. Acyrthosiphon pisum (strain 5A).